Reading from the N-terminus, the 424-residue chain is Gamma-glutamyl phosphate reductase (424 aa).

Belongs to the gamma-glutamyl phosphate reductase family.

The protein resides in the cytoplasm. The enzyme catalyses L-glutamate 5-semialdehyde + phosphate + NADP(+) = L-glutamyl 5-phosphate + NADPH + H(+). The protein operates within amino-acid biosynthesis; L-proline biosynthesis; L-glutamate 5-semialdehyde from L-glutamate: step 2/2. Catalyzes the NADPH-dependent reduction of L-glutamate 5-phosphate into L-glutamate 5-semialdehyde and phosphate. The product spontaneously undergoes cyclization to form 1-pyrroline-5-carboxylate. The protein is Gamma-glutamyl phosphate reductase of Shewanella sediminis (strain HAW-EB3).